Here is a 328-residue protein sequence, read N- to C-terminus: Endochitinase (328 aa).

A signal peptide spans 1 to 26; that stretch reads MRRHKEVNFVAYLLFSLLVLVSAALA. Positions 27-68 constitute a Chitin-binding type-1 domain; that stretch reads QNCGSQGGGKACASGQCCSKFGWCGNTNDYCGSGNCQSQCPG. Intrachain disulfides connect cysteine 29–cysteine 44, cysteine 38–cysteine 50, cysteine 43–cysteine 57, cysteine 62–cysteine 66, cysteine 100–cysteine 162, cysteine 174–cysteine 182, and cysteine 281–cysteine 313. Glutamate 144 acts as the Proton donor in catalysis. Residues 322 to 328 constitute a propeptide, removed in mature form; that stretch reads ALLVDTL.

Belongs to the glycosyl hydrolase 19 family. Chitinase class I subfamily.

The protein localises to the vacuole. The catalysed reaction is Random endo-hydrolysis of N-acetyl-beta-D-glucosaminide (1-&gt;4)-beta-linkages in chitin and chitodextrins.. In terms of biological role, defense against chitin-containing fungal pathogens. The polypeptide is Endochitinase (Solanum tuberosum (Potato)).